The sequence spans 98 residues: ESAT-6-like protein EsxM (98 aa).

This sequence belongs to the WXG100 family. CFP-10 subfamily.

The protein localises to the secreted. Alters the host macrophage cytoskeleton and enhances macrophage motility. Promotes granuloma efflux, extrapulmonary dissemination of infection and bone disease. This chain is ESAT-6-like protein EsxM, found in Mycobacterium marinum (strain ATCC BAA-535 / M).